A 220-amino-acid chain; its full sequence is Deoxyribose-phosphate aldolase 2 (220 aa).

The active-site Proton donor/acceptor is the aspartate 89. The Schiff-base intermediate with acetaldehyde role is filled by lysine 151. Lysine 180 acts as the Proton donor/acceptor in catalysis.

This sequence belongs to the DeoC/FbaB aldolase family. DeoC type 1 subfamily.

The protein localises to the cytoplasm. The catalysed reaction is 2-deoxy-D-ribose 5-phosphate = D-glyceraldehyde 3-phosphate + acetaldehyde. Its pathway is carbohydrate degradation; 2-deoxy-D-ribose 1-phosphate degradation; D-glyceraldehyde 3-phosphate and acetaldehyde from 2-deoxy-alpha-D-ribose 1-phosphate: step 2/2. Catalyzes a reversible aldol reaction between acetaldehyde and D-glyceraldehyde 3-phosphate to generate 2-deoxy-D-ribose 5-phosphate. The sequence is that of Deoxyribose-phosphate aldolase 2 from Staphylococcus aureus (strain N315).